The following is a 524-amino-acid chain: Phosphoenolpyruvate carboxykinase (ATP) (524 aa).

Positions 52, 188, and 194 each coordinate substrate. ATP-binding positions include Lys-194, His-213, and Gly-229–Thr-237. Lys-194 and His-213 together coordinate Mn(2+). Asp-250 is a binding site for Mn(2+). Residues Glu-278, Arg-314, and Thr-439 each contribute to the ATP site. A substrate-binding site is contributed by Arg-314.

The protein belongs to the phosphoenolpyruvate carboxykinase (ATP) family. The cofactor is Mn(2+).

It localises to the cytoplasm. It catalyses the reaction oxaloacetate + ATP = phosphoenolpyruvate + ADP + CO2. The protein operates within carbohydrate biosynthesis; gluconeogenesis. Functionally, involved in the gluconeogenesis. Catalyzes the conversion of oxaloacetate (OAA) to phosphoenolpyruvate (PEP) through direct phosphoryl transfer between the nucleoside triphosphate and OAA. The chain is Phosphoenolpyruvate carboxykinase (ATP) from Campylobacter jejuni (strain RM1221).